The sequence spans 186 residues: dCTP deaminase (186 aa).

DCTP is bound at residue lysine 107 to arginine 112. The Proton donor/acceptor role is filled by glutamate 133. DCTP is bound by residues glutamine 152, tyrosine 166, and glutamine 176.

The protein belongs to the dCTP deaminase family. In terms of assembly, homotrimer.

It carries out the reaction dCTP + H2O + H(+) = dUTP + NH4(+). It functions in the pathway pyrimidine metabolism; dUMP biosynthesis; dUMP from dCTP (dUTP route): step 1/2. In terms of biological role, catalyzes the deamination of dCTP to dUTP. The sequence is that of dCTP deaminase from Chloroflexus aggregans (strain MD-66 / DSM 9485).